The sequence spans 261 residues: Thiazole synthase (261 aa).

K101 functions as the Schiff-base intermediate with DXP in the catalytic mechanism. Residues G162, 188–189 (AG), and 210–211 (NT) each bind 1-deoxy-D-xylulose 5-phosphate.

It belongs to the ThiG family. As to quaternary structure, homotetramer. Forms heterodimers with either ThiH or ThiS.

Its subcellular location is the cytoplasm. It catalyses the reaction [ThiS sulfur-carrier protein]-C-terminal-Gly-aminoethanethioate + 2-iminoacetate + 1-deoxy-D-xylulose 5-phosphate = [ThiS sulfur-carrier protein]-C-terminal Gly-Gly + 2-[(2R,5Z)-2-carboxy-4-methylthiazol-5(2H)-ylidene]ethyl phosphate + 2 H2O + H(+). It functions in the pathway cofactor biosynthesis; thiamine diphosphate biosynthesis. Catalyzes the rearrangement of 1-deoxy-D-xylulose 5-phosphate (DXP) to produce the thiazole phosphate moiety of thiamine. Sulfur is provided by the thiocarboxylate moiety of the carrier protein ThiS. In vitro, sulfur can be provided by H(2)S. The protein is Thiazole synthase of Aromatoleum aromaticum (strain DSM 19018 / LMG 30748 / EbN1) (Azoarcus sp. (strain EbN1)).